The chain runs to 274 residues: Large ribosomal subunit protein uL2 (274 aa).

The interval 224–256 is disordered; sequence VMNPVDHPHGGGEGKTGEGRHPVDPWGNLTKGY. The segment covering 229-246 has biased composition (basic and acidic residues); sequence DHPHGGGEGKTGEGRHPV.

It belongs to the universal ribosomal protein uL2 family. Part of the 50S ribosomal subunit. Forms a bridge to the 30S subunit in the 70S ribosome.

In terms of biological role, one of the primary rRNA binding proteins. Required for association of the 30S and 50S subunits to form the 70S ribosome, for tRNA binding and peptide bond formation. It has been suggested to have peptidyltransferase activity; this is somewhat controversial. Makes several contacts with the 16S rRNA in the 70S ribosome. In Polaromonas naphthalenivorans (strain CJ2), this protein is Large ribosomal subunit protein uL2.